Reading from the N-terminus, the 557-residue chain is Urocanate hydratase (557 aa).

The tract at residues 1–20 (MSNPRHNEREVRSPRGDELN) is disordered. NAD(+)-binding positions include 52 to 53 (GG), glutamine 130, 176 to 178 (GMG), glutamate 196, arginine 201, 242 to 243 (NA), 263 to 267 (QTSAH), 273 to 274 (YL), and tyrosine 322. Residue cysteine 410 is part of the active site. Glycine 492 serves as a coordination point for NAD(+).

It belongs to the urocanase family. The cofactor is NAD(+).

It localises to the cytoplasm. It carries out the reaction 4-imidazolone-5-propanoate = trans-urocanate + H2O. It functions in the pathway amino-acid degradation; L-histidine degradation into L-glutamate; N-formimidoyl-L-glutamate from L-histidine: step 2/3. Catalyzes the conversion of urocanate to 4-imidazolone-5-propionate. The polypeptide is Urocanate hydratase (Brucella anthropi (strain ATCC 49188 / DSM 6882 / CCUG 24695 / JCM 21032 / LMG 3331 / NBRC 15819 / NCTC 12168 / Alc 37) (Ochrobactrum anthropi)).